The sequence spans 468 residues: UDP-N-acetylmuramoylalanine--D-glutamate ligase (468 aa).

ATP is bound at residue 127-133 (GTNGKTT).

The protein belongs to the MurCDEF family.

The protein localises to the cytoplasm. The enzyme catalyses UDP-N-acetyl-alpha-D-muramoyl-L-alanine + D-glutamate + ATP = UDP-N-acetyl-alpha-D-muramoyl-L-alanyl-D-glutamate + ADP + phosphate + H(+). It functions in the pathway cell wall biogenesis; peptidoglycan biosynthesis. Functionally, cell wall formation. Catalyzes the addition of glutamate to the nucleotide precursor UDP-N-acetylmuramoyl-L-alanine (UMA). This is UDP-N-acetylmuramoylalanine--D-glutamate ligase from Prochlorococcus marinus (strain MIT 9312).